The primary structure comprises 411 residues: Dual specificity protein phosphatase Mpk3 (411 aa).

One can recognise a Rhodanese domain in the interval 22 to 149 (DSKDLILLDC…FRQAFPEWCE (128 aa)). Low complexity predominate over residues 184–197 (DSACSSSAESSDCE). The tract at residues 184 to 209 (DSACSSSAESSDCESSSHHHHHHSHH) is disordered. The Tyrosine-protein phosphatase domain occupies 214–358 (APVEIIPGLL…LLSFESQLRL (145 aa)). The active-site Phosphocysteine intermediate is the Cys-302.

This sequence belongs to the protein-tyrosine phosphatase family. Non-receptor class dual specificity subfamily. Interacts (via N-terminal region) with phosphorylated rl. Ubiquitous expression in eye and wing imaginal disks. Enriched in ovary.

The protein resides in the cytoplasm. The catalysed reaction is O-phospho-L-tyrosyl-[protein] + H2O = L-tyrosyl-[protein] + phosphate. It carries out the reaction O-phospho-L-seryl-[protein] + H2O = L-seryl-[protein] + phosphate. The enzyme catalyses O-phospho-L-threonyl-[protein] + H2O = L-threonyl-[protein] + phosphate. Its activity is regulated as follows. Activity abolished by tyrosine phosphatase inhibitor sodium vanadate. Activated by rl. Negatively regulates the activity of members of the MAP kinase family in response to changes in the cellular environment. Has a specificity for the ERK family. Acts as a negative regulator in a variety of developmental processes including cell differentiation and proliferation controlled by the Ras/ERK pathway. Suppresses the photoreceptor cell differentiation and wing vein formation. Required for proper oogenesis and early embryogenesis. Functions autonomously in a subset of photoreceptor progenitor cells in eye imaginal disks. Also appears to be required in surrounding non-neuronal cells for ommatidial patterning and photoreceptor differentiation. Plays a role in the maintenance of epithelial integrity during tracheal development. In Drosophila melanogaster (Fruit fly), this protein is Dual specificity protein phosphatase Mpk3 (Mkp3).